Here is a 668-residue protein sequence, read N- to C-terminus: Fructose-1,6-bisphosphatase class 3 (668 aa).

Belongs to the FBPase class 3 family. Mn(2+) serves as cofactor.

It catalyses the reaction beta-D-fructose 1,6-bisphosphate + H2O = beta-D-fructose 6-phosphate + phosphate. The protein operates within carbohydrate biosynthesis; gluconeogenesis. This Clostridium botulinum (strain Loch Maree / Type A3) protein is Fructose-1,6-bisphosphatase class 3.